Consider the following 472-residue polypeptide: Alkaline phosphatase (472 aa).

Positions 1–21 (MKQSAIALALLSCLITPVSQA) are cleaved as a signal peptide. D74 serves as a coordination point for Mg(2+). D74 contacts Zn(2+). The active-site Phosphoserine intermediate is the S125. Mg(2+) is bound by residues D176 and T178. Cystine bridges form between C191–C201 and C309–C359. Residue E345 participates in Mg(2+) binding. Zn(2+) contacts are provided by D350, H354, D392, H393, and H435.

This sequence belongs to the alkaline phosphatase family. As to quaternary structure, homodimer. It depends on Mg(2+) as a cofactor. Requires Zn(2+) as cofactor.

Its subcellular location is the periplasm. It carries out the reaction a phosphate monoester + H2O = an alcohol + phosphate. This chain is Alkaline phosphatase (phoA), found in Escherichia fergusonii (strain ATCC 35469 / DSM 13698 / CCUG 18766 / IAM 14443 / JCM 21226 / LMG 7866 / NBRC 102419 / NCTC 12128 / CDC 0568-73).